We begin with the raw amino-acid sequence, 50 residues long: Peptide encoded by miPEP319a (50 aa).

Regulatory peptide encoded by the primary transcript (pri-miR319a) of the microRNA miR319a that enhances the accumulation of its corresponding mature miRNA. Acts probably as a transcriptional activator of its corresponding pri-miRNA. The protein is Peptide encoded by miPEP319a of Arabidopsis thaliana (Mouse-ear cress).